A 345-amino-acid polypeptide reads, in one-letter code: Phenylalanine--tRNA ligase alpha subunit (345 aa).

Glu-262 is a Mg(2+) binding site.

Belongs to the class-II aminoacyl-tRNA synthetase family. Phe-tRNA synthetase alpha subunit type 1 subfamily. As to quaternary structure, tetramer of two alpha and two beta subunits. Mg(2+) serves as cofactor.

It localises to the cytoplasm. The catalysed reaction is tRNA(Phe) + L-phenylalanine + ATP = L-phenylalanyl-tRNA(Phe) + AMP + diphosphate + H(+). The polypeptide is Phenylalanine--tRNA ligase alpha subunit (Ehrlichia canis (strain Jake)).